Here is a 284-residue protein sequence, read N- to C-terminus: D-tagatose-1,6-bisphosphate aldolase subunit GatY (284 aa).

Residue D82 is the Proton donor of the active site. Positions 83 and 180 each coordinate Zn(2+). G181 contacts dihydroxyacetone phosphate. Zn(2+) is bound at residue H208. Residues 209–211 (GAS) and 230–233 (NVAT) each bind dihydroxyacetone phosphate.

Belongs to the class II fructose-bisphosphate aldolase family. TagBP aldolase GatY subfamily. In terms of assembly, forms a complex with GatZ. Requires Zn(2+) as cofactor.

It carries out the reaction D-tagatofuranose 1,6-bisphosphate = D-glyceraldehyde 3-phosphate + dihydroxyacetone phosphate. The protein operates within carbohydrate metabolism; D-tagatose 6-phosphate degradation; D-glyceraldehyde 3-phosphate and glycerone phosphate from D-tagatose 6-phosphate: step 2/2. Catalytic subunit of the tagatose-1,6-bisphosphate aldolase GatYZ, which catalyzes the reversible aldol condensation of dihydroxyacetone phosphate (DHAP or glycerone-phosphate) with glyceraldehyde 3-phosphate (G3P) to produce tagatose 1,6-bisphosphate (TBP). Requires GatZ subunit for full activity and stability. Is involved in the catabolism of galactitol. The protein is D-tagatose-1,6-bisphosphate aldolase subunit GatY of Klebsiella pneumoniae subsp. pneumoniae (strain ATCC 700721 / MGH 78578).